Here is a 339-residue protein sequence, read N- to C-terminus: Holliday junction branch migration complex subunit RuvB (339 aa).

The segment at 2-187 (KDVNEEERII…FGIIEHMQYY (186 aa)) is large ATPase domain (RuvB-L). Residues Leu26, Arg27, Gly68, Lys71, Thr72, Thr73, 134–136 (EDF), Arg177, Tyr187, and Arg224 each bind ATP. Residue Thr72 coordinates Mg(2+). Residues 188–258 (SVEDLEKIIQ…TTKHSLHLLE (71 aa)) form a small ATPAse domain (RuvB-S) region. The interval 261–339 (DEGLDQTDRK…QLGYPPKDEK (79 aa)) is head domain (RuvB-H). DNA-binding residues include Arg316 and Arg321.

It belongs to the RuvB family. As to quaternary structure, homohexamer. Forms an RuvA(8)-RuvB(12)-Holliday junction (HJ) complex. HJ DNA is sandwiched between 2 RuvA tetramers; dsDNA enters through RuvA and exits via RuvB. An RuvB hexamer assembles on each DNA strand where it exits the tetramer. Each RuvB hexamer is contacted by two RuvA subunits (via domain III) on 2 adjacent RuvB subunits; this complex drives branch migration. In the full resolvosome a probable DNA-RuvA(4)-RuvB(12)-RuvC(2) complex forms which resolves the HJ.

The protein localises to the cytoplasm. The enzyme catalyses ATP + H2O = ADP + phosphate + H(+). The RuvA-RuvB-RuvC complex processes Holliday junction (HJ) DNA during genetic recombination and DNA repair, while the RuvA-RuvB complex plays an important role in the rescue of blocked DNA replication forks via replication fork reversal (RFR). RuvA specifically binds to HJ cruciform DNA, conferring on it an open structure. The RuvB hexamer acts as an ATP-dependent pump, pulling dsDNA into and through the RuvAB complex. RuvB forms 2 homohexamers on either side of HJ DNA bound by 1 or 2 RuvA tetramers; 4 subunits per hexamer contact DNA at a time. Coordinated motions by a converter formed by DNA-disengaged RuvB subunits stimulates ATP hydrolysis and nucleotide exchange. Immobilization of the converter enables RuvB to convert the ATP-contained energy into a lever motion, pulling 2 nucleotides of DNA out of the RuvA tetramer per ATP hydrolyzed, thus driving DNA branch migration. The RuvB motors rotate together with the DNA substrate, which together with the progressing nucleotide cycle form the mechanistic basis for DNA recombination by continuous HJ branch migration. Branch migration allows RuvC to scan DNA until it finds its consensus sequence, where it cleaves and resolves cruciform DNA. This is Holliday junction branch migration complex subunit RuvB from Lactobacillus johnsonii (strain CNCM I-12250 / La1 / NCC 533).